The sequence spans 1342 residues: DNA-directed RNA polymerase subunit beta (1342 aa).

This sequence belongs to the RNA polymerase beta chain family. The RNAP catalytic core consists of 2 alpha, 1 beta, 1 beta' and 1 omega subunit. When a sigma factor is associated with the core the holoenzyme is formed, which can initiate transcription.

The enzyme catalyses RNA(n) + a ribonucleoside 5'-triphosphate = RNA(n+1) + diphosphate. In terms of biological role, DNA-dependent RNA polymerase catalyzes the transcription of DNA into RNA using the four ribonucleoside triphosphates as substrates. In Buchnera aphidicola subsp. Schizaphis graminum (strain Sg), this protein is DNA-directed RNA polymerase subunit beta.